Reading from the N-terminus, the 893-residue chain is Translation initiation factor IF-2 (893 aa).

Residues 1–266 form a disordered region; sequence MVDTKNPGDK…AKPAPSKQRG (266 aa). The segment covering 59–70 has biased composition (low complexity); sequence PADAPTAAAAAP. Pro residues predominate over residues 71-92; the sequence is APAPAPVPSAAPRPAAPPPPSR. Residues 93–104 show a composition bias toward low complexity; that stretch reads PQQSRSQSPSRS. 2 stretches are compositionally biased toward basic and acidic residues: residues 128–148 and 155–196; these read ARVRDEEERRAAEAEVARRNS and AERE…EAKR. Residues 197-226 show a composition bias toward low complexity; the sequence is PAAAATPAKSATPAARPTGAPAVRAPGVAA. Residues 389-560 enclose the tr-type G domain; sequence PRSPVVTVMG…ALQAELLDLK (172 aa). The tract at residues 398-405 is G1; sequence GHVDHGKT. Residue 398–405 participates in GTP binding; sequence GHVDHGKT. Residues 423 to 427 form a G2 region; it reads GITQH. Residues 446 to 449 form a G3 region; it reads DTPG. Residues 446–450 and 500–503 each bind GTP; these read DTPGH and NKID. The interval 500-503 is G4; it reads NKID. The tract at residues 536-538 is G5; that stretch reads SAK.

The protein belongs to the TRAFAC class translation factor GTPase superfamily. Classic translation factor GTPase family. IF-2 subfamily.

It is found in the cytoplasm. Functionally, one of the essential components for the initiation of protein synthesis. Protects formylmethionyl-tRNA from spontaneous hydrolysis and promotes its binding to the 30S ribosomal subunits. Also involved in the hydrolysis of GTP during the formation of the 70S ribosomal complex. The polypeptide is Translation initiation factor IF-2 (Rhodopseudomonas palustris (strain BisA53)).